A 312-amino-acid polypeptide reads, in one-letter code: tRNA pseudouridine synthase B (312 aa).

D46 (nucleophile) is an active-site residue. 3 residues coordinate substrate: Y74, Y177, and L198.

It belongs to the pseudouridine synthase TruB family. Type 1 subfamily.

The enzyme catalyses uridine(55) in tRNA = pseudouridine(55) in tRNA. Functionally, responsible for synthesis of pseudouridine from uracil-55 in the psi GC loop of transfer RNAs. The polypeptide is tRNA pseudouridine synthase B (Buchnera aphidicola subsp. Acyrthosiphon pisum (strain APS) (Acyrthosiphon pisum symbiotic bacterium)).